Reading from the N-terminus, the 462-residue chain is Cysteine--tRNA ligase (462 aa).

C24 serves as a coordination point for Zn(2+). Positions P26–H36 match the 'HIGH' region motif. The Zn(2+) site is built by C199, H224, and E228. The 'KMSKS' region signature appears at K256 to S260. K259 serves as a coordination point for ATP.

It belongs to the class-I aminoacyl-tRNA synthetase family. In terms of assembly, monomer. Zn(2+) serves as cofactor.

The protein localises to the cytoplasm. It catalyses the reaction tRNA(Cys) + L-cysteine + ATP = L-cysteinyl-tRNA(Cys) + AMP + diphosphate. This is Cysteine--tRNA ligase from Campylobacter jejuni subsp. jejuni serotype O:23/36 (strain 81-176).